We begin with the raw amino-acid sequence, 927 residues long: Perchlorate reductase subunit alpha (927 aa).

Positions 1 to 31 form a signal peptide, tat-type signal; the sequence is MVQMTRRGFLLASGATLLGSSLSFRTLAAAA. One can recognise a 4Fe-4S Mo/W bis-MGD-type domain in the interval 53 to 116; the sequence is DKKTRGAHLI…CAHDYMYGPH (64 aa). [4Fe-4S] cluster contacts are provided by histidine 60, cysteine 64, cysteine 68, and cysteine 102. Position 198 (aspartate 198) interacts with Mo-bis(molybdopterin guanine dinucleotide).

It belongs to the prokaryotic molybdopterin-containing oxidoreductase family. As to quaternary structure, heterotrimer of alpha, beta and gamma subunits. It depends on [4Fe-4S] cluster as a cofactor. Mo-bis(molybdopterin guanine dinucleotide) serves as cofactor. Post-translationally, predicted to be exported by the Tat system. The position of the signal peptide cleavage has not been experimentally proven.

Its subcellular location is the periplasm. Functionally, component of the perchlorate reductase that catalyzes the reduction of perchlorate to chlorite and allows anaerobic growth on perchlorate as the sole electron acceptor. Is probably also able to reduce chlorate to chlorite. The alpha subunit is likely the catalytic subunit. This is Perchlorate reductase subunit alpha (pcrA) from Dechloromonas aromatica (strain RCB).